Here is a 207-residue protein sequence, read N- to C-terminus: TM2 domain-containing protein 1 (207 aa).

The first 37 residues, 1-37 (MAAAWPSGPSAPEAVTARLVGVLWFVSVTTGPWGAVA), serve as a signal peptide directing secretion. Topologically, residues 40–128 (AGGEESLKCE…YSYKVAVALS (89 aa)) are extracellular. Residues asparagine 72, asparagine 75, asparagine 87, and asparagine 96 are each glycosylated (N-linked (GlcNAc...) asparagine). A TM2 domain is found at 118 to 166 (GYSYKVAVALSLFLGWLGADRFYLGYPALGLLKFCTVGFCGIGSLIDFI). Residues 129-149 (LFLGWLGADRFYLGYPALGLL) traverse the membrane as a helical segment. Residues 150-153 (KFCT) are Cytoplasmic-facing. The helical transmembrane segment at 154-174 (VGFCGIGSLIDFILISMQIVG) threads the bilayer. Residues 175-207 (PSDGSSYIIDYYGTRLTRLSITNETFRKTQLYP) are Extracellular-facing. N-linked (GlcNAc...) asparagine glycosylation occurs at asparagine 197.

This sequence belongs to the TM2 family. Interacts with APP beta-APP42 (amyloid-beta protein 42). Post-translationally, N-glycosylated. In terms of tissue distribution, widely expressed.

It localises to the membrane. Its function is as follows. May participate in amyloid-beta-induced apoptosis via its interaction with beta-APP42. This chain is TM2 domain-containing protein 1 (TM2D1), found in Homo sapiens (Human).